The chain runs to 76 residues: Defensin-like protein 163 (76 aa).

An N-terminal signal peptide occupies residues 1-27 (MAKLIYSYLFISMFVLSVLLALPNAEG). Intrachain disulfides connect Cys33–Cys76, Cys43–Cys62, Cys48–Cys70, and Cys52–Cys72.

This sequence belongs to the DEFL family.

The protein resides in the secreted. The sequence is that of Defensin-like protein 163 (LCR24) from Arabidopsis thaliana (Mouse-ear cress).